Reading from the N-terminus, the 217-residue chain is Uracil-DNA glycosylase (217 aa).

Residue Asp62 is the Proton acceptor of the active site.

This sequence belongs to the uracil-DNA glycosylase (UDG) superfamily. UNG family.

Its subcellular location is the cytoplasm. The catalysed reaction is Hydrolyzes single-stranded DNA or mismatched double-stranded DNA and polynucleotides, releasing free uracil.. Excises uracil residues from the DNA which can arise as a result of misincorporation of dUMP residues by DNA polymerase or due to deamination of cytosine. This chain is Uracil-DNA glycosylase, found in Streptococcus equi subsp. zooepidemicus (strain H70).